Consider the following 749-residue polypeptide: Fibronectin type III and SPRY domain-containing protein 2 (749 aa).

A coiled-coil region spans residues 205–317 (LNEALESAKD…TIEEMCHEEK (113 aa)). Fibronectin type-III domains lie at 375–470 (PVIN…TAPS) and 471–564 (PPII…TIGS). A B30.2/SPRY domain is found at 546–744 (NMGGPSVRSE…KVHNGISMPK (199 aa)).

In terms of assembly, interacts with CMYA5. In cardiac muscles, identified in a complex composed of FSD2, CMYA5 and RYR2.

Its subcellular location is the nucleus. It is found in the sarcoplasmic reticulum. It localises to the cytoplasm. The protein resides in the perinuclear region. The polypeptide is Fibronectin type III and SPRY domain-containing protein 2 (FSD2) (Homo sapiens (Human)).